Consider the following 417-residue polypeptide: MESKNRAKLLVSVLAIVIAFAVFIKPLVSTVKQGLDLQGGTHVVLQAQETPESKVDDDAINRSIQIISRRVNELGLTEPVIQRQGKDKIIVELPGVKDPEQAIAMLGKTAMLEFKDMEGNTVLTGKDLKDSKASADQSGQPVVTLQFNEDGAKKFADLTARNVGRQIAILLDGKVLTAPRVSEPITGGNAQITGSKDAKEAEHLAILLRSGSLPVKLEVVENRTVGPTLGQDAKDASMKAFAIGLAGVFLFMLLYYRLSGLVADIVLLLYTLLLLAVMKGLNATLTLPGMAGIILSIGMAVDANVLIFERFKEEIANGKTLRAAVNSGFSRAFTTILDSNVTTLMAAAVLFYLGTGPIKGFAVTLALGVLISMFTAVTVTKFILGALIGSNFTKNPAWFGAKAFQPKAKDGKGEAAR.

The next 6 membrane-spanning stretches (helical) occupy residues 9–29 (LLVSVLAIVIAFAVFIKPLVS), 236–256 (ASMKAFAIGLAGVFLFMLLYY), 258–278 (LSGLVADIVLLLYTLLLLAVM), 288–308 (PGMAGIILSIGMAVDANVLIF), 333–353 (FTTILDSNVTTLMAAAVLFYL), and 360–380 (GFAVTLALGVLISMFTAVTVT).

This sequence belongs to the SecD/SecF family. SecD subfamily. As to quaternary structure, forms a complex with SecF. Part of the essential Sec protein translocation apparatus which comprises SecA, SecYEG and auxiliary proteins SecDF. Other proteins may also be involved.

The protein resides in the cell membrane. Functionally, part of the Sec protein translocase complex. Interacts with the SecYEG preprotein conducting channel. SecDF uses the proton motive force (PMF) to complete protein translocation after the ATP-dependent function of SecA. This Acidaminococcus fermentans (strain ATCC 25085 / DSM 20731 / CCUG 9996 / CIP 106432 / VR4) protein is Protein translocase subunit SecD.